Reading from the N-terminus, the 256-residue chain is 1-(5-phosphoribosyl)-5-[(5-phosphoribosylamino)methylideneamino] imidazole-4-carboxamide isomerase (256 aa).

Residue Asp8 is the Proton acceptor of the active site. Asp130 acts as the Proton donor in catalysis.

The protein belongs to the HisA/HisF family.

It is found in the cytoplasm. The catalysed reaction is 1-(5-phospho-beta-D-ribosyl)-5-[(5-phospho-beta-D-ribosylamino)methylideneamino]imidazole-4-carboxamide = 5-[(5-phospho-1-deoxy-D-ribulos-1-ylimino)methylamino]-1-(5-phospho-beta-D-ribosyl)imidazole-4-carboxamide. It functions in the pathway amino-acid biosynthesis; L-histidine biosynthesis; L-histidine from 5-phospho-alpha-D-ribose 1-diphosphate: step 4/9. This chain is 1-(5-phosphoribosyl)-5-[(5-phosphoribosylamino)methylideneamino] imidazole-4-carboxamide isomerase, found in Chlorobium luteolum (strain DSM 273 / BCRC 81028 / 2530) (Pelodictyon luteolum).